Here is a 130-residue protein sequence, read N- to C-terminus: Small ribosomal subunit protein uS9 (130 aa).

It belongs to the universal ribosomal protein uS9 family.

This is Small ribosomal subunit protein uS9 from Shigella sonnei (strain Ss046).